The following is a 303-amino-acid chain: Ribosomal protein L11 methyltransferase (303 aa).

Positions 144, 165, 187, and 235 each coordinate S-adenosyl-L-methionine.

It belongs to the methyltransferase superfamily. PrmA family.

It is found in the cytoplasm. The catalysed reaction is L-lysyl-[protein] + 3 S-adenosyl-L-methionine = N(6),N(6),N(6)-trimethyl-L-lysyl-[protein] + 3 S-adenosyl-L-homocysteine + 3 H(+). Methylates ribosomal protein L11. In Prochlorococcus marinus (strain MIT 9312), this protein is Ribosomal protein L11 methyltransferase.